A 433-amino-acid polypeptide reads, in one-letter code: Keratin, type I cytoskeletal 47 kDa (433 aa).

The segment at 1–73 (MSYSTRSISQ…AFNVSVTSNN (73 aa)) is head. The segment at 74 to 109 (GKETMQNLNDRLANYLDRVRSLEQANHELELKIREY) is coil 1A. The 312-residue stretch at 74–385 (GKETMQNLND…RLLEGEDTRF (312 aa)) folds into the IF rod domain. Positions 110-127 (LDKKAAVGSLDYSGYYNT) are linker 1. Residues 128–219 (INLLRSQIND…KNHEEELAVV (92 aa)) form a coil 1B region. The interval 220-242 (RSSARGNVDVQVDSAPPVDLAQI) is linker 12. Residues 243 to 381 (MADVRSQYES…ATYRRLLEGE (139 aa)) are coil 2. Residues 382 to 433 (DTRFSQTETQKAVTIVSKEQSSSSIKKVKTVIEEVVDGKVVSSRVEELTETS) form a tail region.

This sequence belongs to the intermediate filament family. In terms of assembly, heterotetramer of two type I and two type II keratins.

This is Keratin, type I cytoskeletal 47 kDa (xk70a) from Xenopus laevis (African clawed frog).